Here is a 434-residue protein sequence, read N- to C-terminus: Putative G3BP-like protein (434 aa).

The NTF2 domain maps to 18 to 134; that stretch reads IGWMFVQEYY…YFVLNDIFRF (117 aa). 2 disordered regions span residues 141-180 and 274-308; these read EEEESPDAVEKEKKDVASEPYVNGVQSQEHLPSAKEEGHY and VKSQASVSSTASTTGQTVKGVNADQTQQPTAPYTQ. S145 bears the Phosphoserine mark. The segment covering 148 to 157 has biased composition (basic and acidic residues); that stretch reads AVEKEKKDVA. Residues 276–291 are compositionally biased toward low complexity; that stretch reads SQASVSSTASTTGQTV. Residues 296–308 show a composition bias toward polar residues; that stretch reads ADQTQQPTAPYTQ. In terms of domain architecture, RRM spans 315–386; that stretch reads TSVFVKNIPP…ATLNIEERRR (72 aa). Positions 390–434 are disordered; the sequence is GKFNKSGDKKSNDNYNGMKRNFRKGNRGAFDGRSKEVTTSKKQNN. The span at 419 to 428 shows a compositional bias: basic and acidic residues; sequence FDGRSKEVTT.

Probable scaffold protein that may be involved in mRNA transport. The chain is Putative G3BP-like protein (nxt3) from Schizosaccharomyces pombe (strain 972 / ATCC 24843) (Fission yeast).